Reading from the N-terminus, the 478-residue chain is Alcohol dehydrogenase (quinone), cytochrome c subunit (478 aa).

Positions 1-36 (MLNALTRDRLVSEMKQGWKLAAAIGLMAVSFGAAHA) are cleaved as a signal peptide. Gln37 is subject to Pyrrolidone carboxylic acid. 3 Cytochrome c domains span residues 42–145 (ALIK…MHGV), 189–304 (PEVA…KSMP), and 327–417 (GQGN…RKGW). Heme c-binding residues include Cys56, Cys59, His60, Cys204, Cys207, His208, Cys340, Cys343, and His344.

The alcohol dehydrogenase multicomponent enzyme system is composed of a dehydrogenase subunit I (AdhA), a cytochrome c subunit II (AdhB) and a subunit III (AdhS). Requires heme c as cofactor.

It localises to the cell membrane. It carries out the reaction ethanol + a ubiquinone = a ubiquinol + acetaldehyde. With respect to regulation, 2,6-dichloro-4-dicyanovinylphenol (PC16) and antimycin A inhibit ubiquinol oxidation activity more selectively than the ubiquinone reductase activity. Its function is as follows. Cytochrome c component of the alcohol dehydrogenase multicomponent enzyme system which is involved in the production of acetic acid and in the ethanol oxidase respiratory chain. Quinohemoprotein alcohol dehydrogenase (ADH) catalyzes the oxidation of ethanol to acetaldehyde by transferring electrons to the ubiquinone embedded in the membrane phospholipids. The electrons transfer from ethanol to membranous ubiquinone occurs from pyrroloquinoline quinone (PQQ) to one heme c in subunit I (AdhA), and finally to two heme c in subunit II (AdhB). Besides ubiquinone reduction, ADH also has a ubiquinol (QH2) oxidation reaction which mediates electron transfer from ubiquinol to the non-energy generating bypass oxidase system. The electrons transfer occurs from ubiquinol (QH2) to the additional heme c within subunit II (AdhB). Also able to use quinone analogs such as 2,3-dimethoxy-5-methyl-6-n-decyl-1,4-benzoquinone (DB) and 2,3-dimethoxy-5-methyl-6-n-pentyl-1,4-benzoquinone (PB). The polypeptide is Alcohol dehydrogenase (quinone), cytochrome c subunit (Gluconobacter oxydans (strain 621H) (Gluconobacter suboxydans)).